The sequence spans 426 residues: Putative FBD-associated F-box protein At5g53635 (426 aa).

In terms of domain architecture, F-box spans 1-45 (MISQLPDPLICHILSHLPIKDLVTTRVLSTRWRSLWLWLPCLELN). The FBD domain occupies 353–405 (MIQFGSSLVPECLLSSLEFVDIRIPFRGHLEVMKLVRYFLENSAILKKLSLDH).

The chain is Putative FBD-associated F-box protein At5g53635 from Arabidopsis thaliana (Mouse-ear cress).